Reading from the N-terminus, the 214-residue chain is MNIFRILGDVSHLLAIIILLLKMWKSKSCAGISGKSQLLFALVFTTRYLDLFTVFISPYNTVMKIIFLACAYVTVYLIYGKLRKSYDSENDTFRLEFLLVPVIGLSFLENYEFTPLEILWTFSIYLESVAILPQLFMISKTGEAESITTHYLFFLGLYRVLYLANWIWRYHTEKFYDQIAVVSGVVQTIFYFDFFYLYVTKVLKGKKLSLPMPV.

Over 1–4 (MNIF) the chain is Lumenal. A helical membrane pass occupies residues 5-24 (RILGDVSHLLAIIILLLKMW). Topologically, residues 25–32 (KSKSCAGI) are cytoplasmic. Residues 33-52 (SGKSQLLFALVFTTRYLDLF) form a helical membrane-spanning segment. Positions 47–48 (RY) are interaction with the K-D-E-L motif on target proteins. The Lumenal portion of the chain corresponds to 53–58 (TVFISP). Residues 59–79 (YNTVMKIIFLACAYVTVYLIY) form a helical membrane-spanning segment. Topologically, residues 80–92 (GKLRKSYDSENDT) are cytoplasmic. Residues 93–110 (FRLEFLLVPVIGLSFLEN) form a helical membrane-spanning segment. Topologically, residues 111 to 116 (YEFTPL) are lumenal. The helical transmembrane segment at 117-135 (EILWTFSIYLESVAILPQL) threads the bilayer. At 136–149 (FMISKTGEAESITT) the chain is on the cytoplasmic side. Residues 150–168 (HYLFFLGLYRVLYLANWIW) traverse the membrane as a helical segment. Positions 159-169 (RVLYLANWIWR) are interaction with the K-D-E-L motif on target proteins. The Lumenal portion of the chain corresponds to 169 to 178 (RYHTEKFYDQ). Residues 179 to 199 (IAVVSGVVQTIFYFDFFYLYV) form a helical membrane-spanning segment. Topologically, residues 200–214 (TKVLKGKKLSLPMPV) are cytoplasmic. Residues 204–207 (KGKK) are important for recycling of cargo proteins with the sequence motif K-D-E-L from the Golgi to the endoplasmic reticulum.

It belongs to the ERD2 family.

Its subcellular location is the endoplasmic reticulum membrane. The protein localises to the golgi apparatus membrane. It is found in the cytoplasmic vesicle. The protein resides in the COPI-coated vesicle membrane. Its function is as follows. Receptor for the C-terminal sequence motif K-D-E-L that is present on endoplasmic reticulum resident proteins and that mediates their recycling from the Golgi back to the endoplasmic reticulum. The polypeptide is ER lumen protein-retaining receptor 3 (kdelr3) (Xenopus laevis (African clawed frog)).